The chain runs to 139 residues: ATP synthase epsilon chain (139 aa).

The protein belongs to the ATPase epsilon chain family. As to quaternary structure, F-type ATPases have 2 components, CF(1) - the catalytic core - and CF(0) - the membrane proton channel. CF(1) has five subunits: alpha(3), beta(3), gamma(1), delta(1), epsilon(1). CF(0) has three main subunits: a, b and c.

The protein resides in the cell membrane. In terms of biological role, produces ATP from ADP in the presence of a proton gradient across the membrane. This Levilactobacillus brevis (strain ATCC 367 / BCRC 12310 / CIP 105137 / JCM 1170 / LMG 11437 / NCIMB 947 / NCTC 947) (Lactobacillus brevis) protein is ATP synthase epsilon chain.